An 84-amino-acid chain; its full sequence is Large ribosomal subunit protein bL27 (84 aa).

A disordered region spans residues 1–21; sequence MAHKKGASSTRNGRDSNAQRL. Over residues 7–19 the composition is skewed to polar residues; that stretch reads ASSTRNGRDSNAQ.

It belongs to the bacterial ribosomal protein bL27 family.

This is Large ribosomal subunit protein bL27 from Clavibacter sepedonicus (Clavibacter michiganensis subsp. sepedonicus).